The chain runs to 103 residues: Antitoxin VapB1 (103 aa).

Antitoxin component of a type II toxin-antitoxin (TA) system. Upon expression in E.coli neutralizes the effect of cognate toxin VapC1, partially inhibits the RNase activity of VapC1 in vitro. The chain is Antitoxin VapB1 (vapB1) from Rickettsia felis (strain ATCC VR-1525 / URRWXCal2) (Rickettsia azadi).